A 2769-amino-acid polypeptide reads, in one-letter code: Thyroglobulin (2769 aa).

The N-terminal stretch at 1–19 (MALALWVFGLLDLICLASA) is a signal peptide. Position 24 is an iodotyrosine; alternate (tyrosine 24). Tyrosine 24 carries the sulfotyrosine; alternate modification. At tyrosine 24 the chain carries Thyroxine; alternate. Residue tyrosine 24 is modified to Triiodothyronine; alternate. Thyroglobulin type-1 domains follow at residues 31–92 (LRPC…PAAC), 93–160 (LSFC…PARC), 161–297 (PRSC…RFRC), and 298–358 (PTKC…PPSC). Disulfide bonds link cysteine 34–cysteine 52, cysteine 63–cysteine 70, cysteine 72–cysteine 92, cysteine 96–cysteine 120, cysteine 131–cysteine 138, cysteine 140–cysteine 160, cysteine 164–cysteine 183, and cysteine 194–cysteine 235. Tyrosine 108 carries the iodotyrosine modification. The N-linked (GlcNAc...) (complex) asparagine; alternate glycan is linked to asparagine 110. Residue asparagine 110 is glycosylated (N-linked (GlcNAc...) (hybrid) asparagine; alternate). Tyrosine 149 bears the Iodotyrosine; alternate mark. A Diiodotyrosine; alternate modification is found at tyrosine 149. Residues tyrosine 234 and tyrosine 258 each carry the iodotyrosine modification. 9 cysteine pairs are disulfide-bonded: cysteine 301-cysteine 319, cysteine 330-cysteine 336, cysteine 338-cysteine 358, cysteine 364-cysteine 619, cysteine 408-cysteine 607, cysteine 630-cysteine 635, cysteine 637-cysteine 657, cysteine 661-cysteine 686, and cysteine 697-cysteine 702. N-linked (GlcNAc...) (complex) asparagine; alternate glycosylation is found at asparagine 483 and asparagine 495. Asparagine 483 and asparagine 495 each carry an N-linked (GlcNAc...) (hybrid) asparagine; alternate glycan. 6 consecutive Thyroglobulin type-1 domains span residues 604-657 (SQGC…RPRC), 658-725 (PTEC…PKKC), 726-921 (PSPC…VPAC), 922-1073 (PGSC…IPQC), 1074-1145 (PTSC…SAQC), and 1146-1210 (PSLC…QPAC). The residue at position 703 (tyrosine 703) is an Iodotyrosine; alternate. The residue at position 703 (tyrosine 703) is a Thyroxine; alternate. Tyrosine 703 is modified (triiodothyronine; alternate). Tyrosine 703 is subject to Diiodotyrosine; alternate. Disulfide bonds link cysteine 704–cysteine 725, cysteine 729–cysteine 762, cysteine 773–cysteine 898, cysteine 900–cysteine 921, cysteine 925–cysteine 1031, cysteine 1042–cysteine 1049, cysteine 1051–cysteine 1073, cysteine 1077–cysteine 1108, cysteine 1126–cysteine 1145, cysteine 1149–cysteine 1169, cysteine 1181–cysteine 1188, cysteine 1190–cysteine 1210, cysteine 1215–cysteine 1264, cysteine 1231–cysteine 1245, cysteine 1306–cysteine 1356, and cysteine 1331–cysteine 1347. Tyrosine 784 carries the iodotyrosine modification. N-linked (GlcNAc...) (complex) asparagine; alternate glycosylation is present at asparagine 853. Asparagine 853 carries an N-linked (GlcNAc...) (hybrid) asparagine; alternate glycan. At tyrosine 866 the chain carries Iodotyrosine; alternate. Tyrosine 866 is subject to Diiodotyrosine; alternate. At tyrosine 883 the chain carries Diiodotyrosine. Asparagine 947 carries N-linked (GlcNAc...) (complex) asparagine; alternate glycosylation. Asparagine 947 carries N-linked (GlcNAc...) (hybrid) asparagine; alternate glycosylation. Tyrosine 992 bears the Iodotyrosine; alternate mark. Tyrosine 992 carries the diiodotyrosine; alternate modification. Asparagine 1140 is a glycosylation site (N-linked (GlcNAc...) (complex) asparagine; alternate). The N-linked (GlcNAc...) (hybrid) asparagine; alternate glycan is linked to asparagine 1140. Position 1310 is an iodotyrosine (tyrosine 1310). A Thyroxine modification is found at tyrosine 1310. The N-linked (GlcNAc...) (high mannose) asparagine glycan is linked to asparagine 1365. Intrachain disulfides connect cysteine 1441–cysteine 1461, cysteine 1464–cysteine 1475, cysteine 1478–cysteine 1492, cysteine 1495–cysteine 1512, cysteine 1516–cysteine 1525, cysteine 1545–cysteine 1567, cysteine 1605–cysteine 1629, cysteine 1609–cysteine 1615, cysteine 1641–cysteine 1664, cysteine 1726–cysteine 1751, cysteine 1730–cysteine 1736, cysteine 1735–cysteine 1836, and cysteine 1762–cysteine 1779. Type II repeat units lie at residues 1458-1471 (ALGC…SYFQ), 1472-1488 (DEQC…EQAG), and 1489-1505 (SLAC…VYAG). Tyrosine 1469 carries the post-translational modification Iodotyrosine; alternate. Position 1469 is a diiodotyrosine; alternate (tyrosine 1469). Residues 1513–1567 (VTDCQKNEVGLQCDQDSQYRASQRDRTSGKAFCVDGEGRRLPWTEAEAPLVDAQC) form the Thyroglobulin type-1 11 domain. A Type IIIA repeat occupies 1605–1725 (CLADCALDEA…GASLAEVHLF (121 aa)). The Type IIIB repeat unit spans residues 1726–1893 (CLLACDHDSC…LFSLQQANLW (168 aa)). The N-linked (GlcNAc...) (complex) asparagine; alternate glycan is linked to asparagine 1776. Asparagine 1776 carries an N-linked (GlcNAc...) (hybrid) asparagine; alternate glycan. Residues 1827 to 1842 (MGSRSESMGCRRDTEP) show a composition bias toward basic and acidic residues. A disordered region spans residues 1827–1851 (MGSRSESMGCRRDTEPRPASPSETD). N-linked (GlcNAc...) (complex) asparagine; alternate glycosylation is present at asparagine 1870. Asparagine 1870 is a glycosylation site (N-linked (GlcNAc...) (hybrid) asparagine; alternate). Intrachain disulfides connect cysteine 1894/cysteine 1920, cysteine 1898/cysteine 1905, cysteine 1929/cysteine 1940, cysteine 1997/cysteine 2025, cysteine 2001/cysteine 2007, cysteine 2006/cysteine 2077, and cysteine 2036/cysteine 2049. A Type IIIA repeat occupies 1894 to 1996 (CLSRCAGEPS…DKSISSGFFE (103 aa)). The Type IIIB repeat unit spans residues 1997–2130 (CERLCDMDPC…VGNFSAARDR (134 aa)). The N-linked (GlcNAc...) (high mannose) asparagine glycan is linked to asparagine 2014. Asparagine 2123 carries an N-linked (GlcNAc...) (high mannose) asparagine glycan. 3 cysteine pairs are disulfide-bonded: cysteine 2131–cysteine 2155, cysteine 2135–cysteine 2141, and cysteine 2164–cysteine 2173. The stretch at 2131–2188 (CLWECSRHQDCLVTTLQTQPGAVRCMFYADTQSCTHSLQAQNCRLLLHEEATYIYRKP) is one Type IIIA repeat. Tyrosine 2185 bears the Iodotyrosine mark. A cholinesterase-like (ChEL) region spans residues 2189 to 2769 (NIPLPGFGTS…PELASKTYSK (581 aa)). An N-linked (GlcNAc...) (complex) asparagine; alternate glycan is attached at asparagine 2251. N-linked (GlcNAc...) (hybrid) asparagine; alternate glycosylation is present at asparagine 2251. Residue asparagine 2296 is glycosylated (N-linked (GlcNAc...) (high mannose) asparagine). A disulfide bond links cysteine 2443 and cysteine 2454. Tyrosine 2541 is modified (thyroxine). Tyrosine 2574 is modified (iodotyrosine; alternate). The residue at position 2574 (tyrosine 2574) is a Thyroxine; alternate. Triiodothyronine; alternate is present on tyrosine 2574. Tyrosine 2574 carries the diiodotyrosine; alternate modification. Tyrosine 2588 and tyrosine 2618 each carry iodotyrosine. Cysteine 2592 and cysteine 2716 are oxidised to a cystine. A Diiodotyrosine modification is found at tyrosine 2698. The tract at residues 2730–2769 (ADETKDGPSADSEEEDQPAGSGLTEDLLGLPELASKTYSK) is disordered. Tyrosine 2767 bears the Iodotyrosine; alternate mark. Tyrosine 2767 is subject to Thyroxine; alternate. Tyrosine 2767 carries the post-translational modification Triiodothyronine; alternate. Diiodotyrosine; alternate is present on tyrosine 2767.

It belongs to the type-B carboxylesterase/lipase family. In terms of assembly, monomer. Homodimer (via ChEL region); occurs in the endoplasmic reticulum and is required for export to the Golgi apparatus. Homooligomer; disulfide-linked; stored in this form in the thyroid follicle lumen. Iodinated on tyrosine residues by TPO. There are 4 pairs of iodinated tyrosines used for coupling: acceptor Tyr-24 is coupled to donor Tyr-149 or Tyr-234, acceptor Tyr-2574 is coupled to donor Tyr-2541, acceptor Tyr-2767 in monomer 1 is coupled to donor Tyr-2767 in monomer 2 and acceptor Tyr-1310 in monomer 1 is coupled to donor Tyr-108 in monomer 2. Post-translationally, sulfated tyrosines are desulfated during iodination. In terms of processing, undergoes sequential proteolysis by cathepsins to release thyroxine (T4) and triiodothyronine (T3) hormones. In the thyroid follicle lumen, cross-linked TG (storage form) is solubilized by limited proteolysis mediated by cathepsins CTSB and/or CTSL. Partially cleaved TG is further processed by CTSK/cathepsin K and/or CTSL resulting in the release of T4. Following endocytosis, further processing occurs leading to the release of T3 and more T4 hormones. As to expression, specifically expressed in the thyroid gland.

It is found in the secreted. Its function is as follows. Acts as a substrate for the production of iodinated thyroid hormones thyroxine (T4) and triiodothyronine (T3). The synthesis of T3 and T4 involves iodination of selected tyrosine residues of TG/thyroglobulin followed by their oxidative coupling. Following TG re-internalization and lysosomal-mediated proteolysis, T3 and T4 are released from the polypeptide backbone leading to their secretion into the bloodstream. One dimer produces 7 thyroid hormone molecules. In Bos taurus (Bovine), this protein is Thyroglobulin (TG).